The primary structure comprises 129 residues: Small ribosomal subunit protein uS9 (129 aa).

Belongs to the universal ribosomal protein uS9 family.

In Helicobacter acinonychis (strain Sheeba), this protein is Small ribosomal subunit protein uS9.